The primary structure comprises 105 residues: Large ribosomal subunit protein bL21 (105 aa).

The protein belongs to the bacterial ribosomal protein bL21 family. Part of the 50S ribosomal subunit. Contacts protein L20.

This protein binds to 23S rRNA in the presence of protein L20. This is Large ribosomal subunit protein bL21 from Rickettsia prowazekii (strain Madrid E).